The following is a 414-amino-acid chain: Serine hydroxymethyltransferase (414 aa).

(6S)-5,6,7,8-tetrahydrofolate is bound by residues Leu-121 and 125–127 (GHL). Lys-229 is subject to N6-(pyridoxal phosphate)lysine.

This sequence belongs to the SHMT family. As to quaternary structure, homodimer. It depends on pyridoxal 5'-phosphate as a cofactor.

Its subcellular location is the cytoplasm. The enzyme catalyses (6R)-5,10-methylene-5,6,7,8-tetrahydrofolate + glycine + H2O = (6S)-5,6,7,8-tetrahydrofolate + L-serine. The protein operates within one-carbon metabolism; tetrahydrofolate interconversion. It functions in the pathway amino-acid biosynthesis; glycine biosynthesis; glycine from L-serine: step 1/1. Functionally, catalyzes the reversible interconversion of serine and glycine with tetrahydrofolate (THF) serving as the one-carbon carrier. This reaction serves as the major source of one-carbon groups required for the biosynthesis of purines, thymidylate, methionine, and other important biomolecules. Also exhibits THF-independent aldolase activity toward beta-hydroxyamino acids, producing glycine and aldehydes, via a retro-aldol mechanism. The protein is Serine hydroxymethyltransferase of Polaromonas naphthalenivorans (strain CJ2).